Here is a 389-residue protein sequence, read N- to C-terminus: Chalcone synthase (389 aa).

Active-site residues include Cys164, His303, and Asn336.

It belongs to the thiolase-like superfamily. Chalcone/stilbene synthases family. In terms of assembly, homodimer. In terms of tissue distribution, mainly expressed in flowers, to a lower extent in young leaves, and barely in mature leaves and twigs.

It carries out the reaction (E)-4-coumaroyl-CoA + 3 malonyl-CoA + 3 H(+) = 2',4,4',6'-tetrahydroxychalcone + 3 CO2 + 4 CoA. It functions in the pathway secondary metabolite biosynthesis; flavonoid biosynthesis. In terms of biological role, the primary product of this enzyme is 4,2',4',6'-tetrahydroxychalcone (also termed naringenin-chalcone or chalcone) which can under specific conditions spontaneously isomerize into naringenin. This Rhododendron dauricum (Azalea daurica) protein is Chalcone synthase.